The following is a 129-amino-acid chain: Fluoride-specific ion channel FluC 2 (129 aa).

A run of 4 helical transmembrane segments spans residues 3–23 (FLYVGVFGALGGMCRYAMNLW), 32–52 (ATLAVNLIGCFLLAFLMQFLA), 59–79 (LVILNGIGTGFIGAFTTFSAF), and 90–110 (GAWLFAVSYVLASFIGGLIMV). Glycine 71 and threonine 74 together coordinate Na(+).

It belongs to the fluoride channel Fluc/FEX (TC 1.A.43) family.

It localises to the cell membrane. It carries out the reaction fluoride(in) = fluoride(out). Na(+) is not transported, but it plays an essential structural role and its presence is essential for fluoride channel function. Functionally, fluoride-specific ion channel. Important for reducing fluoride concentration in the cell, thus reducing its toxicity. The protein is Fluoride-specific ion channel FluC 2 of Listeria monocytogenes serotype 4b (strain F2365).